A 321-amino-acid polypeptide reads, in one-letter code: MIFATLEHILTHISFSIISIVITIQLIDLLVYQIVGICDSSEKGIIATFFCITGLLITRWIYSRHFPLSDLYESLMFLSWSFSIIHMVPKAGNHKNDLSAITGPSAIFTQGFATSDLLTEMHQSAILVPALQSQWLMMHVSMMLLSYAALLCGALLSVAFLVITFRKNTDIAVKSNYLLIGTFSFGEIQYLNEKRSVLQNTSFPSFRNYHRYRLTQRLDHWSYRVISLGFIFSTIGILSGAVWANEAWGSYWNWDPKETWAFITWTIFAIYLHTRTNQSLQGVNSSIVASIGFLIIWICYFGVNLLGIGLHSYGSFTLTAN.

A run of 6 helical transmembrane segments spans residues 17–37, 43–63, 143–163, 225–245, 258–275, and 287–307; these read IISI…IVGI, KGII…WIYS, MLLS…FLVI, VISL…VWAN, ETWA…LHTR, and IVAS…NLLG.

It belongs to the CcmF/CycK/Ccl1/NrfE/CcsA family. As to quaternary structure, may interact with Ccs1.

It is found in the plastid. The protein localises to the chloroplast thylakoid membrane. Its function is as follows. Required during biogenesis of c-type cytochromes (cytochrome c6 and cytochrome f) at the step of heme attachment. The polypeptide is Cytochrome c biogenesis protein CcsA (Drimys granadensis).